The primary structure comprises 1134 residues: TBC1 domain family member 8 (1134 aa).

GRAM domains are found at residues 145-212 (VKFE…ERTS) and 285-353 (EFFR…EKME). The tract at residues 433-466 (ASQSSEEREEKRPLPHPEPLTAVFQQSGSQSPDS) is disordered. Over residues 437–447 (SEEREEKRPLP) the composition is skewed to basic and acidic residues. A compositionally biased stretch (polar residues) spans 455 to 466 (VFQQSGSQSPDS). In terms of domain architecture, Rab-GAP TBC spans 504–691 (GIPESLRGRL…HVVDCFFYDG (188 aa)). A disordered region spans residues 1034 to 1070 (SSSGSCSQECEEPQASAPPEQDSVFAEAGKSPQAFPE).

Functionally, may act as a GTPase-activating protein for Rab family protein(s). In Mus musculus (Mouse), this protein is TBC1 domain family member 8 (Tbc1d8).